The sequence spans 246 residues: MDMAGHEVNSSSSSSGAESSSSSSGRQQYKKRPAGRTKFRETRHPVYRGVRRRGGAGRWVCEVRVPGKRGARLWLGTYVTAEAAARAHDAAMIALRGGAGGGGAACLNFQDSAWLLAVPPAAPSDLAGVRRAATEAVAGFLQRNKTTNGASVAEAMDEATSGVSAPPPLANNAGSSETPGPSSIDGTADTAAGAALDMFELDFFGEMDYDTYYASLAEGLLMEPPPAATALWDNGDEGADIALWSY.

A disordered region spans residues 1-43 (MDMAGHEVNSSSSSSGAESSSSSSGRQQYKKRPAGRTKFRETR). The span at 10–24 (SSSSSSGAESSSSSS) shows a compositional bias: low complexity. The segment covering 28 to 37 (QYKKRPAGRT) has biased composition (basic residues). The AP2/ERF DNA-binding region spans 46–110 (VYRGVRRRGG…GGGAACLNFQ (65 aa)). Positions 155–187 (AMDEATSGVSAPPPLANNAGSSETPGPSSIDGT) are disordered. The segment covering 172 to 181 (NAGSSETPGP) has biased composition (polar residues).

The protein belongs to the AP2/ERF transcription factor family. ERF subfamily.

It is found in the nucleus. In terms of biological role, transcriptional activator that binds specifically to the DNA sequence 5'-[AG]CCGAC-3'. Binding to the C-repeat/DRE element mediates high salinity- and dehydration-inducible transcription. The chain is Dehydration-responsive element-binding protein 1H (DREB1H) from Oryza sativa subsp. indica (Rice).